The primary structure comprises 354 residues: Src kinase-associated phosphoprotein 1 (354 aa).

In terms of domain architecture, PH spans 107-210 (NVIKQGYLEK…WVDQISFLLK (104 aa)). A phosphotyrosine mark is found at Y142 and Y236. Residues Y267 and Y290 each carry the phosphotyrosine; by FYN modification. An interaction with FYB1 region spans residues 285–290 (RRRVDY). The 62-residue stretch at 289–350 (DYADYYQGLW…PKDYLTTAFE (62 aa)) folds into the SH3 domain.

Belongs to the SKAP family. In terms of assembly, homodimer. Interacts with FYN. Interacts with PTPRC. Interacts with GRB2 when phosphorylated on Tyr-267. Interacts with FYB1, which is required for SKAP2 protein stability. Part of a complex consisting of SKAP1, FYB1 and CLNK. Interacts with RASGRP1. Interacts with FYB2. In terms of processing, phosphorylated on tyrosines. Phosphorylation by FYN on Tyr-267 is required for GRB2 interaction. Phosphorylation by FYN on Tyr-290 abolishes interaction with FYB1. Tyr-236 is dephosphorylated by PTPRC. In terms of tissue distribution, expressed in mast cells (at protein level).

The protein localises to the cytoplasm. Its subcellular location is the nucleus. The protein resides in the cell membrane. Positively regulates T-cell receptor signaling by enhancing the MAP kinase pathway. Required for optimal conjugation between T-cells and antigen-presenting cells by promoting the clustering of integrin ITGAL on the surface of T-cells. May be involved in high affinity immunoglobulin epsilon receptor signaling in mast cells. The sequence is that of Src kinase-associated phosphoprotein 1 (Skap1) from Rattus norvegicus (Rat).